The following is a 149-amino-acid chain: SPbeta prophage-derived putative transcriptional regulator YosT (149 aa).

The protein is SPbeta prophage-derived putative transcriptional regulator YosT (yosT) of Bacillus subtilis (strain 168).